The following is a 490-amino-acid chain: GTPase Der (490 aa).

2 consecutive EngA-type G domains span residues 3–166 and 203–376; these read PVVA…MEDL and IKLA…DSST. Residues 9–16, 56–60, 118–121, 209–216, 256–260, and 321–324 contribute to the GTP site; these read GRPNVGKS, DTGGI, NKTD, DTAGV, and NKWD. The KH-like domain occupies 377–461; the sequence is RRVGTSMLTR…PIRIQFKEGE (85 aa).

The protein belongs to the TRAFAC class TrmE-Era-EngA-EngB-Septin-like GTPase superfamily. EngA (Der) GTPase family. Associates with the 50S ribosomal subunit.

In terms of biological role, GTPase that plays an essential role in the late steps of ribosome biogenesis. This Escherichia coli O157:H7 protein is GTPase Der.